A 248-amino-acid chain; its full sequence is Pulmonary surfactant-associated protein A (248 aa).

The first 20 residues, methionine 1 to cysteine 20, serve as a signal peptide directing secretion. N-linked (GlcNAc...) asparagine glycosylation is present at asparagine 21. Residues glycine 28–proline 100 enclose the Collagen-like domain. Residues glycine 28–proline 100 form a disordered region. 4-hydroxyproline occurs at positions 30, 33, 36, 42, 54, 57, 63, 67, 70, and 76. Basic and acidic residues predominate over residues proline 42–lysine 51. Residues proline 54–glycine 65 show a composition bias toward pro residues. The span at leucine 69–proline 82 shows a compositional bias: low complexity. Over residues glutamate 84–glutamate 93 the composition is skewed to basic and acidic residues. Positions leucine 132–phenylalanine 248 constitute a C-type lectin domain. Intrachain disulfides connect cysteine 155-cysteine 246 and cysteine 224-cysteine 238. N-linked (GlcNAc...) asparagine glycosylation occurs at asparagine 207. The Ca(2+) site is built by glutamate 215, arginine 217, asparagine 234, and aspartate 235.

This sequence belongs to the SFTPA family. Oligomeric complex of 6 set of homotrimers.

Its subcellular location is the secreted. The protein resides in the extracellular space. It is found in the extracellular matrix. The protein localises to the surface film. In presence of calcium ions, it binds to surfactant phospholipids and contributes to lower the surface tension at the air-liquid interface in the alveoli of the mammalian lung and is essential for normal respiration. Enhances the expression of MYO18A/SP-R210 on alveolar macrophages. This is Pulmonary surfactant-associated protein A (Sftpa1) from Mus musculus (Mouse).